A 189-amino-acid chain; its full sequence is Glutathione-dependent formaldehyde-activating enzyme (189 aa).

Positions 20-167 constitute a CENP-V/GFA domain; the sequence is FAGGTLVCKC…LKELGLEPYD (148 aa). Zn(2+)-binding residues include C27, C29, C48, C50, C53, C95, and C98.

The protein belongs to the Gfa family. Zn(2+) is required as a cofactor.

It carries out the reaction S-(hydroxymethyl)glutathione = glutathione + formaldehyde. It participates in one-carbon metabolism; formaldehyde degradation; formate from formaldehyde (glutathione route): step 1/3. Functionally, catalyzes the condensation of formaldehyde and glutathione to S-hydroxymethylglutathione. The protein is Glutathione-dependent formaldehyde-activating enzyme of Rhodopseudomonas palustris (strain BisA53).